A 481-amino-acid polypeptide reads, in one-letter code: Glutamate-1-semialdehyde 2,1-aminomutase, chloroplastic (481 aa).

Positions 18 to 40 are disordered; sequence NQTPKWGFSPSHRRCNPSSSSSA. At K321 the chain carries N6-(pyridoxal phosphate)lysine.

This sequence belongs to the class-III pyridoxal-phosphate-dependent aminotransferase family. HemL subfamily. Homodimer. It depends on pyridoxal 5'-phosphate as a cofactor.

The protein localises to the plastid. Its subcellular location is the chloroplast. The catalysed reaction is (S)-4-amino-5-oxopentanoate = 5-aminolevulinate. It functions in the pathway porphyrin-containing compound metabolism; protoporphyrin-IX biosynthesis; 5-aminolevulinate from L-glutamyl-tRNA(Glu): step 2/2. It participates in porphyrin-containing compound metabolism; chlorophyll biosynthesis. This chain is Glutamate-1-semialdehyde 2,1-aminomutase, chloroplastic, found in Solanum lycopersicum (Tomato).